The sequence spans 291 residues: Small ribosomal subunit biogenesis GTPase RsgA (291 aa).

The region spanning 63–221 (HNELKRPPVS…IADTPGFSAL (159 aa)) is the CP-type G domain. GTP is bound by residues 112 to 115 (TKKD) and 164 to 172 (GQSGVGKST). Zn(2+) is bound by residues C245, C250, H252, and C258.

This sequence belongs to the TRAFAC class YlqF/YawG GTPase family. RsgA subfamily. In terms of assembly, monomer. Associates with 30S ribosomal subunit, binds 16S rRNA. Requires Zn(2+) as cofactor.

It is found in the cytoplasm. Functionally, one of several proteins that assist in the late maturation steps of the functional core of the 30S ribosomal subunit. Helps release RbfA from mature subunits. May play a role in the assembly of ribosomal proteins into the subunit. Circularly permuted GTPase that catalyzes slow GTP hydrolysis, GTPase activity is stimulated by the 30S ribosomal subunit. This Staphylococcus haemolyticus (strain JCSC1435) protein is Small ribosomal subunit biogenesis GTPase RsgA.